The chain runs to 308 residues: Sulfate adenylyltransferase subunit 2 (308 aa).

This sequence belongs to the PAPS reductase family. CysD subfamily. In terms of assembly, heterodimer composed of CysD, the smaller subunit, and CysN.

It carries out the reaction sulfate + ATP + H(+) = adenosine 5'-phosphosulfate + diphosphate. It functions in the pathway sulfur metabolism; hydrogen sulfide biosynthesis; sulfite from sulfate: step 1/3. With CysN forms the ATP sulfurylase (ATPS) that catalyzes the adenylation of sulfate producing adenosine 5'-phosphosulfate (APS) and diphosphate, the first enzymatic step in sulfur assimilation pathway. APS synthesis involves the formation of a high-energy phosphoric-sulfuric acid anhydride bond driven by GTP hydrolysis by CysN coupled to ATP hydrolysis by CysD. This is Sulfate adenylyltransferase subunit 2 from Chromobacterium violaceum (strain ATCC 12472 / DSM 30191 / JCM 1249 / CCUG 213 / NBRC 12614 / NCIMB 9131 / NCTC 9757 / MK).